The primary structure comprises 363 residues: NAD(P)H-quinone oxidoreductase subunit 1, chloroplastic (363 aa).

The next 9 helical transmembrane spans lie at 30 to 50 (LVPI…IVWL), 98 to 118 (FSIG…VIPF), 129 to 149 (IGVF…LMSG), 165 to 185 (AAQS…ISLL), 203 to 223 (LWGW…ISSL), 248 to 268 (YSGI…LVSS), 269 to 289 (LFVT…IFVP), 300 to 320 (VFGT…FLFI), and 334 to 354 (DQLL…NLLL).

It belongs to the complex I subunit 1 family. As to quaternary structure, NDH is composed of at least 16 different subunits, 5 of which are encoded in the nucleus.

The protein localises to the plastid. Its subcellular location is the chloroplast thylakoid membrane. The enzyme catalyses a plastoquinone + NADH + (n+1) H(+)(in) = a plastoquinol + NAD(+) + n H(+)(out). The catalysed reaction is a plastoquinone + NADPH + (n+1) H(+)(in) = a plastoquinol + NADP(+) + n H(+)(out). Its function is as follows. NDH shuttles electrons from NAD(P)H:plastoquinone, via FMN and iron-sulfur (Fe-S) centers, to quinones in the photosynthetic chain and possibly in a chloroplast respiratory chain. The immediate electron acceptor for the enzyme in this species is believed to be plastoquinone. Couples the redox reaction to proton translocation, and thus conserves the redox energy in a proton gradient. The sequence is that of NAD(P)H-quinone oxidoreductase subunit 1, chloroplastic from Oenothera elata subsp. hookeri (Hooker's evening primrose).